The primary structure comprises 531 residues: Probable inactive beta-glucosidase 25 (531 aa).

An N-terminal signal peptide occupies residues 1-24; sequence MALKAILFLGLFLVVIVSPITVYG. A beta-D-glucoside is bound by residues Gln53 and 202-203; that span reads NE. Residue Glu203 is the Proton donor of the active site. A disulfide bridge connects residues Cys222 and Cys230. Residues Phe348 and 477–478 each bind a beta-D-glucoside; that span reads EW.

The protein belongs to the glycosyl hydrolase 1 family.

This is Probable inactive beta-glucosidase 25 from Arabidopsis thaliana (Mouse-ear cress).